Reading from the N-terminus, the 438-residue chain is AP-2 complex subunit mu (438 aa).

The 261-residue stretch at 177-437 (KNEVFLDIVE…ITKAGSYEIR (261 aa)) folds into the MHD domain.

It belongs to the adaptor complexes medium subunit family. As to quaternary structure, adaptor protein complex 2 (AP-2) is a heterotetramer composed of two large adaptins (alpha-type and beta-type subunits), a medium adaptin (mu-type subunit) and a small adaptin (sigma-type subunit).

It localises to the cell membrane. Its subcellular location is the membrane. The protein resides in the coated pit. The protein localises to the golgi apparatus. It is found in the trans-Golgi network membrane. Its function is as follows. Subunit of the adaptor protein complex 2 (AP-2). Adaptor protein complexes function in protein transport via transport vesicles in different membrane traffic pathways. Adaptor protein complexes are vesicle coat components and appear to be involved in cargo selection and vesicle formation. AP-2 is involved in clathrin-dependent endocytosis in which cargo proteins are incorporated into vesicles surrounded by clathrin (clathrin-coated vesicles, CCVs) which are destined for fusion with the early endosome. AP-2 recognizes Y-X-X-Phi endocytosis signal motif within the cytosolic tails of transmembrane cargo molecules. The complex binds polyphosphoinositides. This Arabidopsis thaliana (Mouse-ear cress) protein is AP-2 complex subunit mu (AP2M).